Here is a 318-residue protein sequence, read N- to C-terminus: tRNA-modifying protein YgfZ (318 aa).

Residues W28 and W182 each contribute to the folate site.

Belongs to the tRNA-modifying YgfZ family.

The protein localises to the cytoplasm. Functionally, folate-binding protein involved in regulating the level of ATP-DnaA and in the modification of some tRNAs. It is probably a key factor in regulatory networks that act via tRNA modification, such as initiation of chromosomal replication. This chain is tRNA-modifying protein YgfZ, found in Aliivibrio fischeri (strain MJ11) (Vibrio fischeri).